The sequence spans 435 residues: Centrosomal protein of 55 kDa (435 aa).

Disordered regions lie at residues 1–63 (MAAK…TDKA), 213–239 (HKEAKSDDQSAQKVQQELEAERNKVSR), and 268–287 (ERRREREDRKSSVERDALLQ). 2 coiled-coil regions span residues 18 to 140 (SSSS…KNKY) and 185 to 373 (EAYV…RESR). Basic and acidic residues-rich tracts occupy residues 26-49 (AELEVEKLKRENQQMKKSLEDMKR) and 213-222 (HKEAKSDDQS).

The protein resides in the cytoplasm. Its subcellular location is the cytoskeleton. It is found in the microtubule organizing center. The protein localises to the centrosome. It localises to the centriole. The protein resides in the cleavage furrow. Its subcellular location is the midbody. It is found in the midbody ring. Its function is as follows. Plays a role in mitotic exit and cytokinesis. Recruits PDCD6IP and TSG101 to midbody during cytokinesis. Required for successful completion of cytokinesis. Not required for microtubule nucleation. Plays a role in the development of the brain and kidney. This is Centrosomal protein of 55 kDa from Danio rerio (Zebrafish).